Reading from the N-terminus, the 539-residue chain is Protoporphyrinogen oxidase (539 aa).

FAD contacts are provided by residues 18–23, 43–44, W51, 70–73, V300, and 521–523; these read GGGVSG, ES, GPRT, and PGV.

It belongs to the protoporphyrinogen/coproporphyrinogen oxidase family. Protoporphyrinogen oxidase subfamily. The cofactor is FAD.

The protein localises to the mitochondrion inner membrane. The enzyme catalyses protoporphyrinogen IX + 3 O2 = protoporphyrin IX + 3 H2O2. Its pathway is porphyrin-containing compound metabolism; protoporphyrin-IX biosynthesis; protoporphyrin-IX from protoporphyrinogen-IX: step 1/1. Catalyzes the 6-electron oxidation of protoporphyrinogen-IX to form protoporphyrin-IX. The chain is Protoporphyrinogen oxidase from Saccharomyces cerevisiae (strain ATCC 204508 / S288c) (Baker's yeast).